The primary structure comprises 357 residues: MSLENFGNFLTLDEKHSFIKKYFKEFYTKDFKLFTSKDKHYRTRAELSFYHENDTLFYAMFDPKSKKKYIIEYLDFADEKICAFMPKLLEYLRQDDKLKEKLFGVEFLTTKQELSVTLLYHKNIEDIKSNLENLSNNLHINLIARSKGKKLIFKTENLRQTLNIQDRKIFYEFNNDCFIQPNTAINEKMITWVCEILNTQKRMDLLELYCGYGNFTLALAPFFFKVLATEISKSNINFALKNCELNNTTNIHFARLSSEELSLAIKKEREFFRLKDIRLDDFNFSHVLVDPPRAGLDKSVIDLIKKYENIIYISCNPITLKENLKELSLTHRVEEFALFDQFVNTPHLECGVFLSKV.

Q180, Y209, N214, E230, and D290 together coordinate S-adenosyl-L-methionine. Residue C315 is the Nucleophile of the active site. E349 functions as the Proton acceptor in the catalytic mechanism.

It belongs to the class I-like SAM-binding methyltransferase superfamily. RNA M5U methyltransferase family. TrmA subfamily.

The enzyme catalyses uridine(54) in tRNA + S-adenosyl-L-methionine = 5-methyluridine(54) in tRNA + S-adenosyl-L-homocysteine + H(+). It carries out the reaction uridine(341) in tmRNA + S-adenosyl-L-methionine = 5-methyluridine(341) in tmRNA + S-adenosyl-L-homocysteine + H(+). In terms of biological role, dual-specificity methyltransferase that catalyzes the formation of 5-methyluridine at position 54 (m5U54) in all tRNAs, and that of position 341 (m5U341) in tmRNA (transfer-mRNA). This chain is tRNA/tmRNA (uracil-C(5))-methyltransferase, found in Campylobacter jejuni subsp. jejuni serotype O:23/36 (strain 81-176).